Consider the following 448-residue polypeptide: Phosphoglucosamine mutase (448 aa).

S100 acts as the Phosphoserine intermediate in catalysis. Positions 100, 240, 242, and 244 each coordinate Mg(2+). Phosphoserine is present on S100.

This sequence belongs to the phosphohexose mutase family. The cofactor is Mg(2+). In terms of processing, activated by phosphorylation.

The catalysed reaction is alpha-D-glucosamine 1-phosphate = D-glucosamine 6-phosphate. Functionally, catalyzes the conversion of glucosamine-6-phosphate to glucosamine-1-phosphate. This Clostridium perfringens (strain SM101 / Type A) protein is Phosphoglucosamine mutase.